The primary structure comprises 504 residues: MELLWLLLLLLMASSTSSRSEMKAGEVIRRSQFPEDFFFGTASSAYQYEGAVREGGRGPSIWDTFTHNHPEKIANGSNGDIAIDSYHRYKEDVGIMKGLGLNAYRFSVSWPRILPNGKLSGGVNLEGIKYYNNLIDELISKGVEPFVTLFHWDSPQALEQQYGGFLSNLIVEDFRDYADICFREFGDRVKYWITFNEPWSFSIGGYSNGILAPGRCSSQGKSGCSKGDSGREPYIVAHNQLLAHAAVVQIYREKYQGGQKGKIGIAIVSNWMIPYEDSKEDKHATKRALDFMYGWFMDPLTKGDYPVSMRTLVGNRLPRFTKEQSKAINGSFDFIGLNYYTARYIQGTKQDSNSHKSYSTDSLTNERVERNGTDIGPKAGSSWLYIYPKGIEELLLYTKRTYNNPTIYITENGVDEVNNENLSLKEALIDTTRIEFYRQHLFHVQRALRQGVDVRGYFAWSLFDNFEWMDGYSVRFGINYIDYKDGLKRYPKRSSQWLQNFLHN.

Residues 1-18 (MELLWLLLLLLMASSTSS) form the signal peptide. An a beta-D-glucoside-binding site is contributed by Q47. N75 carries an N-linked (GlcNAc...) asparagine glycan. A beta-D-glucoside-binding positions include H151 and 196 to 197 (NE). The active-site Proton donor is the E197. A disulfide bond links C216 and C224. Residue N329 is glycosylated (N-linked (GlcNAc...) asparagine). Y340 contacts a beta-D-glucoside. The N-linked (GlcNAc...) asparagine glycan is linked to N371. E411 contributes to the a beta-D-glucoside binding site. The Nucleophile role is filled by E411. N421 carries an N-linked (GlcNAc...) asparagine glycan. Residues W460, 467–468 (EW), and F476 contribute to the a beta-D-glucoside site.

It belongs to the glycosyl hydrolase 1 family.

It catalyses the reaction Hydrolysis of terminal, non-reducing beta-D-glucosyl residues with release of beta-D-glucose.. The polypeptide is Beta-glucosidase 24 (BGLU24) (Oryza sativa subsp. japonica (Rice)).